We begin with the raw amino-acid sequence, 283 residues long: Chromatin modification-related protein png1 (283 aa).

Residues 137–171 show a composition bias toward low complexity; it reads YSPSGASSARQTPAPSRSGASTAGRRRTSATTRGA. Positions 137 to 224 are disordered; the sequence is YSPSGASSAR…NEMVSEEDME (88 aa). The span at 181-216 shows a compositional bias: polar residues; that stretch reads YTASLADSGSTRGQKVSNATATTQLETKADSTTPNE. The segment at 228–277 adopts a PHD-type zinc-finger fold; the sequence is EKYCFCQQGSYGQMVACDNANCEREWFHMECVGLKAPPEGTWYCEACRDQ. Residues Cys231, Cys233, Cys244, Cys249, His255, Cys258, Cys271, and Cys274 each coordinate Zn(2+).

The protein belongs to the ING family. As to quaternary structure, interacts with H3K4me3 and to a lesser extent with H3K4me2. Component of a histone deacetylase complex.

Its subcellular location is the nucleus. Functionally, component of a histone deacetylase complex responsible for the deacetylation of lysine residues on the N-terminal part of the core histones (H2A, H2B, H3 and H4). Histone deacetylation gives a tag for epigenetic repression and plays an important role in transcriptional regulation, cell cycle progression and developmental events. Has a role in silencing of mating type genes. This is Chromatin modification-related protein png1 (png1) from Schizosaccharomyces pombe (strain 972 / ATCC 24843) (Fission yeast).